A 38-amino-acid polypeptide reads, in one-letter code: Large ribosomal subunit protein bL36c (38 aa).

Belongs to the bacterial ribosomal protein bL36 family.

It is found in the plastid. The protein resides in the chloroplast. This chain is Large ribosomal subunit protein bL36c (rpl36), found in Mesostigma viride (Green alga).